A 349-amino-acid chain; its full sequence is Early nodulin-like protein 2 (349 aa).

Residues 1 to 28 (MTFLKMKSLSFFFTILLSLSTLFTISNA) form the signal peptide. The 102-residue stretch at 29–130 (RKFNVGGSGA…GQKLNVVVIS (102 aa)) folds into the Phytocyanin domain. The cysteines at positions 84 and 118 are disulfide-linked. The interval 136–330 (TAQSPHAAAP…GQKKSSANGM (195 aa)) is disordered. Low complexity-rich tracts occupy residues 145-201 (PGSS…SPPG) and 224-234 (TSPVSPSSAPM). Polar residues predominate over residues 249-260 (IPPSSAPMTSPP). Positions 263–312 (MAPKSSSPVSNSPTVSPSLAPGGSTSSSPSDSPSGSAMGPSGDGPSAAGD) are enriched in low complexity. S325 carries the GPI-anchor amidated serine lipid modification. A propeptide spans 326-349 (SANGMTVMSITTVLSLVLTIFLSA) (removed in mature form).

The protein belongs to the early nodulin-like (ENODL) family. Mostly expressed in leaves and roots, and, to a lower extent, in seedlings, stems and flowers, but barely in seeds.

The protein resides in the cell membrane. In terms of biological role, may act as a carbohydrate transporter. The sequence is that of Early nodulin-like protein 2 from Arabidopsis thaliana (Mouse-ear cress).